The chain runs to 159 residues: 2-C-methyl-D-erythritol 2,4-cyclodiphosphate synthase (159 aa).

Residues Asp-8 and His-10 each coordinate a divalent metal cation. Residues 8-10 (DVH) and 34-35 (HS) contribute to the 4-CDP-2-C-methyl-D-erythritol 2-phosphate site. His-42 is an a divalent metal cation binding site. Residues 56-58 (DIG), 61-65 (FPDTD), 100-106 (AQAPKML), 132-135 (TTTE), Phe-139, and Arg-142 contribute to the 4-CDP-2-C-methyl-D-erythritol 2-phosphate site.

This sequence belongs to the IspF family. Homotrimer. Requires a divalent metal cation as cofactor.

The catalysed reaction is 4-CDP-2-C-methyl-D-erythritol 2-phosphate = 2-C-methyl-D-erythritol 2,4-cyclic diphosphate + CMP. Its pathway is isoprenoid biosynthesis; isopentenyl diphosphate biosynthesis via DXP pathway; isopentenyl diphosphate from 1-deoxy-D-xylulose 5-phosphate: step 4/6. Functionally, involved in the biosynthesis of isopentenyl diphosphate (IPP) and dimethylallyl diphosphate (DMAPP), two major building blocks of isoprenoid compounds. Catalyzes the conversion of 4-diphosphocytidyl-2-C-methyl-D-erythritol 2-phosphate (CDP-ME2P) to 2-C-methyl-D-erythritol 2,4-cyclodiphosphate (ME-CPP) with a corresponding release of cytidine 5-monophosphate (CMP). The chain is 2-C-methyl-D-erythritol 2,4-cyclodiphosphate synthase from Salmonella dublin (strain CT_02021853).